The following is a 317-amino-acid chain: 2,3-dihydroxyphenylpropionate/2,3-dihydroxicinnamic acid 1,2-dioxygenase (317 aa).

The Proton donor role is filled by H115. The active-site Proton acceptor is the H179.

This sequence belongs to the LigB/MhpB extradiol dioxygenase family. As to quaternary structure, homotetramer. Requires Fe(2+) as cofactor.

It carries out the reaction 3-(2,3-dihydroxyphenyl)propanoate + O2 = (2Z,4E)-2-hydroxy-6-oxonona-2,4-dienedioate + H(+). It catalyses the reaction (2E)-3-(2,3-dihydroxyphenyl)prop-2-enoate + O2 = (2Z,4E,7E)-2-hydroxy-6-oxonona-2,4,7-trienedioate + H(+). It participates in aromatic compound metabolism; 3-phenylpropanoate degradation. Its function is as follows. Catalyzes the non-heme iron(II)-dependent oxidative cleavage of 2,3-dihydroxyphenylpropionic acid and 2,3-dihydroxicinnamic acid into 2-hydroxy-6-ketononadienedioate and 2-hydroxy-6-ketononatrienedioate, respectively. The polypeptide is 2,3-dihydroxyphenylpropionate/2,3-dihydroxicinnamic acid 1,2-dioxygenase (Photorhabdus laumondii subsp. laumondii (strain DSM 15139 / CIP 105565 / TT01) (Photorhabdus luminescens subsp. laumondii)).